A 438-amino-acid polypeptide reads, in one-letter code: Battenin (438 aa).

The segment at 1–27 (MGSSAGSWRRLEDSEREETDSEPQAPR) is disordered. Over 1–37 (MGSSAGSWRRLEDSEREETDSEPQAPRLDSRSVLWKN) the chain is Cytoplasmic. Residue S14 is modified to Phosphoserine. A helical membrane pass occupies residues 38 to 58 (AVGFWILGLCNNFSYVVMLSA). At 59–127 (AHDILKQEQA…GLHLLPYSPR (69 aa)) the chain is on the lumenal side. Positions 67-87 (QASGNQSHVEPGPTPTPHNSS) are disordered. N-linked (GlcNAc...) asparagine glycans are attached at residues N71 and N85. The chain crosses the membrane as a helical span at residues 128–148 (VLVSGVCSAGSFVLVAFSQSV). Residues 149 to 151 (GLS) lie on the Cytoplasmic side of the membrane. A helical transmembrane segment spans residues 152–172 (LCGVVLASISSGLGEVTFLSL). Residues 173 to 182 (TAFYPSAVIS) are Lumenal-facing. The helical transmembrane segment at 183–203 (WWSSGTGGAGLLGSLSYLGLT) threads the bilayer. The Cytoplasmic portion of the chain corresponds to 204 to 277 (QAGLSPQHTL…DLSLQERWTV (74 aa)). The interval 239-261 (PGGENEAETAARQPLIGTETPES) is disordered. Positions 242–244 (ENE) match the Lysosomal targeting motif motif. A Lysosomal targeting motif. Required for AP1G1, AP2A2 and AP3D1 interaction motif is present at residues 253–254 (LI). The chain crosses the membrane as a helical span at residues 278–298 (FKGLLWYIIPLVLVYFAEYFI). Residues 299-346 (NQGLFELLFFRNTSLSHAQQYRWYQMLYQAGVFASRSSLQCCRIRFTW) are Lumenal-facing. N310 carries N-linked (GlcNAc...) asparagine glycosylation. The helical transmembrane segment at 347–367 (VLALLQCLNLALLLADVCLNF) threads the bilayer. Topologically, residues 368–438 (LPSIYLIFII…PLHDFLCHLP (71 aa)) are cytoplasmic. A Lysosomal targeting motif motif is present at residues 409–419 (MEAACISDTLG). Residue C435 is modified to Cysteine methyl ester. A lipid anchor (S-farnesyl cysteine) is attached at C435. Residues 436–438 (HLP) constitute a propeptide, removed in mature form.

This sequence belongs to the battenin family. As to quaternary structure, homooligomer. Interacts with DCTN1, KIF3A, RAB7A and RILP. Interacts with CLN5. Interacts with KCNIP3. Post-translationally, highly glycosylated. In terms of processing, farnesylation is important for trafficking to lysosomes. Expressed throughout the brain, such as, in the cerebral cortex, hippocampus, cerebellum and several different cerebral nuclei (at protein level). In the cerebral cortex, expressed in all cortical layers. In the hippocampus, expressed in the granule cells in the dentate gyrus and the pyramidal cells of the hippocampus proper. In the cerebellum expressed in the granular and molecular layers, and in the Purkinje cell layer.

The protein localises to the lysosome membrane. Its subcellular location is the late endosome. It localises to the lysosome. It is found in the membrane raft. The protein resides in the golgi apparatus. The protein localises to the trans-Golgi network. Its subcellular location is the synapse. It localises to the synaptosome. It is found in the early endosome membrane. The protein resides in the late endosome membrane. The protein localises to the cytoplasmic vesicle. Its subcellular location is the autophagosome. In terms of biological role, mediates microtubule-dependent, anterograde transport connecting the Golgi network, endosomes, autophagosomes, lysosomes and plasma membrane, and participates in several cellular processes such as regulation of lysosomal pH, lysosome protein degradation, receptor-mediated endocytosis, autophagy, transport of proteins and lipids from the TGN, apoptosis and synaptic transmission. Facilitates the proteins transport from trans-Golgi network (TGN)-to other membrane compartments such as transport of microdomain-associated proteins to the plasma membrane, IGF2R transport to the lysosome where it regulates the CTSD release leading to regulation of CTSD maturation and thereby APP intracellular processing. Moreover regulates CTSD activity in response to osmotic stress. Also binds galactosylceramide and transports it from the trans Golgi to the rafts, which may have immediate and downstream effects on cell survival by modulating ceramide synthesis. At the plasma membrane, regulates actin-dependent events including filopodia formation, cell migration, and pinocytosis through ARF1-CDC42 pathway and also the cytoskeleton organization through interaction with MYH10 and fodrin leading to the regulation of the plasma membrane association of Na+, K+ ATPase complex. Regulates synaptic transmission in the amygdala, hippocampus, and cerebellum through regulation of synaptic vesicles density and their proximity to active zones leading to modulation of short-term plasticity and age-dependent anxious behavior, learning and memory. Regulates autophagic vacuoles (AVs) maturation by modulating the trafficking between endocytic and autophagolysosomal/lysosomal compartments, which involves vesicle fusion leading to regulation of degradation process. Also participates in cellular homeostasis of compounds such as, water, ions, amino acids, proteins and lipids in several tissue namely in brain and kidney through regulation of their transport and synthesis. This chain is Battenin, found in Mus musculus (Mouse).